The following is a 235-amino-acid chain: Large ribosomal subunit protein uL1 (235 aa).

This sequence belongs to the universal ribosomal protein uL1 family. As to quaternary structure, part of the 50S ribosomal subunit.

In terms of biological role, binds directly to 23S rRNA. The L1 stalk is quite mobile in the ribosome, and is involved in E site tRNA release. Functionally, protein L1 is also a translational repressor protein, it controls the translation of the L11 operon by binding to its mRNA. The chain is Large ribosomal subunit protein uL1 from Symbiobacterium thermophilum (strain DSM 24528 / JCM 14929 / IAM 14863 / T).